Here is a 510-residue protein sequence, read N- to C-terminus: Zinc finger and SCAN domain-containing protein 18 (510 aa).

Positions 1-40 (MLPLEKAFASPRSSPAPPDLPTPGSAAGVQQEEPETIPER) are disordered. Positions 49 to 131 (RLRFREFVYQ…SLVEGLADVL (83 aa)) constitute an SCAN box domain. Disordered stretches follow at residues 172 to 191 (ALGAGEIPAPSETPWLSPDP), 201 to 231 (EAKTEEDGPANTEQKLKSFPEDPQHLGEWGH), 263 to 413 (TEEL…GKPY), and 461 to 510 (KTHE…EAQR). Basic and acidic residues-rich tracts occupy residues 214-231 (QKLKSFPEDPQHLGEWGH) and 263-273 (TEELRLVERDP). Residues 288–299 (AGCACEEAAPAG) show a composition bias toward low complexity. The segment covering 344 to 356 (DSATGSQRQSVIQ) has biased composition (polar residues). C2H2-type zinc fingers lie at residues 413-435 (YACGECGEAFAWLSHLMEHHSSH) and 441-463 (YACQGCWKTFHFSLALAEHQKTH). The segment covering 491–501 (GGPPESVEGEA) has biased composition (low complexity).

It belongs to the krueppel C2H2-type zinc-finger protein family.

It localises to the nucleus. In terms of biological role, may be involved in transcriptional regulation. This is Zinc finger and SCAN domain-containing protein 18 (ZSCAN18) from Homo sapiens (Human).